Consider the following 386-residue polypeptide: MAP kinase-activated protein kinase 2 (386 aa).

Residues 1 to 29 are disordered; that stretch reads MLSGSPGQTPPAPFPSPPPPAPAQPPPPF. Residues 8 to 29 are compositionally biased toward pro residues; sequence QTPPAPFPSPPPPAPAQPPPPF. Positions 50 to 311 constitute a Protein kinase domain; the sequence is KVTSQVLGLG…ITEFMNHPWI (262 aa). ATP contacts are provided by residues 56–64 and K79; that span reads LGLGINGKV. 125–127 is a binding site for staurosporine; sequence ECL. The active-site Proton acceptor is D172. T208 bears the Phosphothreonine; by MAPK14 mark. S258 bears the Phosphoserine; by MAPK14 mark. Phosphoserine; by autocatalysis is present on S314. An autoinhibitory helix region spans residues 314-350; sequence STKVPQTPLHTSRVLKEDKERWEDVKEEMTSALATMR. Position 320 is a phosphothreonine; by MAPK14 (T320). 2 short sequence motifs (nuclear export signal (NES)) span residues 331 to 354 and 342 to 351; these read DKERWEDVKEEMTSALATMRVDYE and MTSALATMRV. A Glycyl lysine isopeptide (Lys-Gly) (interchain with G-Cter in SUMO) cross-link involves residue K339. A p38 MAPK-binding site region spans residues 352 to 376; that stretch reads DYEQIKIKKIEDASNPLLLKRRKKA. 2 short sequence motifs (bipartite nuclear localization signal) span residues 357–360 and 371–375; these read KIKK and KRRKK.

The protein belongs to the protein kinase superfamily. CAMK Ser/Thr protein kinase family. In terms of assembly, heterodimer with p38-alpha/MAPK14; this heterodimer forms a stable complex: molecules are positioned 'face to face' so that the ATP-binding sites of both kinases are at the heterodimer interface. Interacts with PHC2. Interacts with HSF1. Post-translationally, sumoylation inhibits the protein kinase activity. In terms of processing, phosphorylated and activated by MAP kinase p38-alpha/MAPK14 at Thr-208; Ser-258 and Thr-320. In terms of tissue distribution, ubiquitously expressed (at protein level).

The protein localises to the cytoplasm. Its subcellular location is the nucleus. The enzyme catalyses L-seryl-[protein] + ATP = O-phospho-L-seryl-[protein] + ADP + H(+). It carries out the reaction L-threonyl-[protein] + ATP = O-phospho-L-threonyl-[protein] + ADP + H(+). With respect to regulation, activated following phosphorylation by p38-alpha/MAPK14 following various stresses. Inhibited following sumoylation. Specifically inhibited by pyrrolopyridine inhibitors. Functionally, stress-activated serine/threonine-protein kinase involved in cytokine production, endocytosis, reorganization of the cytoskeleton, cell migration, cell cycle control, chromatin remodeling, DNA damage response and transcriptional regulation. Following stress, it is phosphorylated and activated by MAP kinase p38-alpha/MAPK14, leading to phosphorylation of substrates. Phosphorylates serine in the peptide sequence, Hyd-X-R-X(2)-S, where Hyd is a large hydrophobic residue. Phosphorylates ALOX5, CDC25B, CDC25C, CEP131, ELAVL1, HNRNPA0, HSP27/HSPB1, KRT18, KRT20, LIMK1, LSP1, PABPC1, PARN, PDE4A, RCSD1, RPS6KA3, TAB3 and TTP/ZFP36. Phosphorylates HSF1; leading to the interaction with HSP90 proteins and inhibiting HSF1 homotrimerization, DNA-binding and transactivation activities. Mediates phosphorylation of HSP27/HSPB1 in response to stress, leading to dissociation of HSP27/HSPB1 from large small heat-shock protein (sHsps) oligomers and impairment of their chaperone activities and ability to protect against oxidative stress effectively. Involved in inflammatory response by regulating tumor necrosis factor (TNF) and IL6 production post-transcriptionally: acts by phosphorylating AU-rich elements (AREs)-binding proteins ELAVL1, HNRNPA0, PABPC1 and TTP/ZFP36, leading to regulation of the stability and translation of TNF and IL6 mRNAs. Phosphorylation of TTP/ZFP36, a major post-transcriptional regulator of TNF, promotes its binding to 14-3-3 proteins and reduces its ARE mRNA affinity leading to inhibition of dependent degradation of ARE-containing transcripts. Phosphorylates CEP131 in response to cellular stress following ultraviolet irradiation which promotes binding of CEP131 to 14-3-3 proteins and inhibits formation of novel centriolar satellites. Also involved in late G2/M checkpoint following DNA damage through a process of post-transcriptional mRNA stabilization: following DNA damage, relocalizes from nucleus to cytoplasm and phosphorylates HNRNPA0 and PARN, leading to stabilization of GADD45A mRNA. Involved in toll-like receptor signaling pathway (TLR) in dendritic cells: required for acute TLR-induced macropinocytosis by phosphorylating and activating RPS6KA3. The protein is MAP kinase-activated protein kinase 2 (Mapkapk2) of Mus musculus (Mouse).